The sequence spans 95 residues: uncharacterized protein (95 aa).

The first 19 residues, 1–19 (MAILMLSLQLILLLIPSIS), serve as a signal peptide directing secretion. 2 N-linked (GlcNAc...) asparagine glycosylation sites follow: Asn-38 and Asn-41.

Its subcellular location is the secreted. This is an uncharacterized protein from Homo sapiens (Human).